A 553-amino-acid chain; its full sequence is Chaperonin GroEL 1 (553 aa).

Residues 29 to 32, 86 to 90, G413, 476 to 478, and D492 each bind ATP; these read TIGP, DGTTT, and NAL. Residues 521–542 are disordered; sequence KPEPPAAPAPGGDPMGGMGGMG. Positions 533-542 are enriched in gly residues; that stretch reads DPMGGMGGMG.

The protein belongs to the chaperonin (HSP60) family. In terms of assembly, forms a cylinder of 14 subunits composed of two heptameric rings stacked back-to-back. Interacts with the co-chaperonin GroES.

It is found in the cytoplasm. The enzyme catalyses ATP + H2O + a folded polypeptide = ADP + phosphate + an unfolded polypeptide.. Together with its co-chaperonin GroES, plays an essential role in assisting protein folding. The GroEL-GroES system forms a nano-cage that allows encapsulation of the non-native substrate proteins and provides a physical environment optimized to promote and accelerate protein folding. This chain is Chaperonin GroEL 1, found in Synechococcus sp. (strain WH7803).